The following is a 321-amino-acid chain: Methenyltetrahydromethanopterin cyclohydrolase (321 aa).

It belongs to the MCH family.

Its subcellular location is the cytoplasm. It catalyses the reaction 5,10-methenyl-5,6,7,8-tetrahydromethanopterin + H2O = N(5)-formyl-5,6,7,8-tetrahydromethanopterin + H(+). Its pathway is one-carbon metabolism; methanogenesis from CO(2); 5,10-methenyl-5,6,7,8-tetrahydromethanopterin from CO(2): step 3/3. In terms of biological role, catalyzes the reversible interconversion of 5-formyl-H(4)MPT to methenyl-H(4)MPT(+). The protein is Methenyltetrahydromethanopterin cyclohydrolase of Methanosarcina mazei (strain ATCC BAA-159 / DSM 3647 / Goe1 / Go1 / JCM 11833 / OCM 88) (Methanosarcina frisia).